A 473-amino-acid polypeptide reads, in one-letter code: Photosystem II CP43 reaction center protein (473 aa).

The propeptide occupies 1–14 (MKILYSLRRYFHVE). Residue T15 is modified to N-acetylthreonine. The residue at position 15 (T15) is a Phosphothreonine. 5 consecutive transmembrane segments (helical) span residues 69–93 (LFEV…PHLA), 134–155 (LIGP…KDKN), 178–200 (KAIW…RKIT), 255–275 (KPFA…LSYS), and 291–312 (WFNN…ASQA). E367 lines the [CaMn4O5] cluster pocket. A helical membrane pass occupies residues 447 to 471 (RARAAAAGFEKGIDRDSEPVLYMEP).

Belongs to the PsbB/PsbC family. PsbC subfamily. As to quaternary structure, PSII is composed of 1 copy each of membrane proteins PsbA, PsbB, PsbC, PsbD, PsbE, PsbF, PsbH, PsbI, PsbJ, PsbK, PsbL, PsbM, PsbT, PsbX, PsbY, PsbZ, Psb30/Ycf12, at least 3 peripheral proteins of the oxygen-evolving complex and a large number of cofactors. It forms dimeric complexes. Binds multiple chlorophylls and provides some of the ligands for the Ca-4Mn-5O cluster of the oxygen-evolving complex. It may also provide a ligand for a Cl- that is required for oxygen evolution. PSII binds additional chlorophylls, carotenoids and specific lipids. serves as cofactor.

The protein localises to the plastid. It is found in the chloroplast thylakoid membrane. Its function is as follows. One of the components of the core complex of photosystem II (PSII). It binds chlorophyll and helps catalyze the primary light-induced photochemical processes of PSII. PSII is a light-driven water:plastoquinone oxidoreductase, using light energy to abstract electrons from H(2)O, generating O(2) and a proton gradient subsequently used for ATP formation. This Chara vulgaris (Common stonewort) protein is Photosystem II CP43 reaction center protein.